The sequence spans 112 residues: T cell receptor alpha variable 13-1 (112 aa).

A signal peptide spans 1 to 20; that stretch reads MTSIRAVFIFLWLQLDLVNG. The Ig-like domain occupies 21 to 112; sequence ENVEQHPSTL…DSAVYFCAAS (92 aa). The cysteines at positions 42 and 109 are disulfide-linked. An N-linked (GlcNAc...) asparagine glycan is attached at Asn86.

As to quaternary structure, alpha-beta TR is a heterodimer composed of an alpha and beta chain; disulfide-linked. The alpha-beta TR is associated with the transmembrane signaling CD3 coreceptor proteins to form the TR-CD3 (TcR or TCR). The assembly of alpha-beta TR heterodimers with CD3 occurs in the endoplasmic reticulum where a single alpha-beta TR heterodimer associates with one CD3D-CD3E heterodimer, one CD3G-CD3E heterodimer and one CD247 homodimer forming a stable octameric structure. CD3D-CD3E and CD3G-CD3E heterodimers preferentially associate with TR alpha and TR beta chains, respectively. The association of the CD247 homodimer is the last step of TcR assembly in the endoplasmic reticulum and is required for transport to the cell surface.

It is found in the cell membrane. V region of the variable domain of T cell receptor (TR) alpha chain that participates in the antigen recognition. Alpha-beta T cell receptors are antigen specific receptors which are essential to the immune response and are present on the cell surface of T lymphocytes. Recognize peptide-major histocompatibility (MH) (pMH) complexes that are displayed by antigen presenting cells (APC), a prerequisite for efficient T cell adaptive immunity against pathogens. Binding of alpha-beta TR to pMH complex initiates TR-CD3 clustering on the cell surface and intracellular activation of LCK that phosphorylates the ITAM motifs of CD3G, CD3D, CD3E and CD247 enabling the recruitment of ZAP70. In turn ZAP70 phosphorylates LAT, which recruits numerous signaling molecules to form the LAT signalosome. The LAT signalosome propagates signal branching to three major signaling pathways, the calcium, the mitogen-activated protein kinase (MAPK) kinase and the nuclear factor NF-kappa-B (NF-kB) pathways, leading to the mobilization of transcription factors that are critical for gene expression and essential for T cell growth and differentiation. The T cell repertoire is generated in the thymus, by V-(D)-J rearrangement. This repertoire is then shaped by intrathymic selection events to generate a peripheral T cell pool of self-MH restricted, non-autoaggressive T cells. Post-thymic interaction of alpha-beta TR with the pMH complexes shapes TR structural and functional avidity. In Homo sapiens (Human), this protein is T cell receptor alpha variable 13-1.